A 378-amino-acid polypeptide reads, in one-letter code: Chorismate synthase (378 aa).

The NADP(+) site is built by Arg48 and Arg54. Residues 125 to 127 (RSS), 238 to 239 (NA), Gly278, 293 to 297 (KPTSS), and Arg319 contribute to the FMN site.

The protein belongs to the chorismate synthase family. Homotetramer. FMNH2 serves as cofactor.

The catalysed reaction is 5-O-(1-carboxyvinyl)-3-phosphoshikimate = chorismate + phosphate. It functions in the pathway metabolic intermediate biosynthesis; chorismate biosynthesis; chorismate from D-erythrose 4-phosphate and phosphoenolpyruvate: step 7/7. In terms of biological role, catalyzes the anti-1,4-elimination of the C-3 phosphate and the C-6 proR hydrogen from 5-enolpyruvylshikimate-3-phosphate (EPSP) to yield chorismate, which is the branch point compound that serves as the starting substrate for the three terminal pathways of aromatic amino acid biosynthesis. This reaction introduces a second double bond into the aromatic ring system. The protein is Chorismate synthase of Azoarcus sp. (strain BH72).